Reading from the N-terminus, the 422-residue chain is L-2-hydroxyglutarate dehydrogenase (422 aa).

Belongs to the L2HGDH family. It depends on FAD as a cofactor.

Its subcellular location is the cell inner membrane. The enzyme catalyses (S)-2-hydroxyglutarate + a quinone = a quinol + 2-oxoglutarate. It participates in amino-acid degradation. Functionally, catalyzes the dehydrogenation of L-2-hydroxyglutarate (L2HG) to alpha-ketoglutarate and couples to the respiratory chain by feeding electrons from the reaction into the membrane quinone pool. Functions in a L-lysine degradation pathway that proceeds via cadaverine, glutarate and L-2-hydroxyglutarate. Also displays some oxidase activity in vitro on L-2-hydroxyglutarate with O2 as the electron acceptor, but this activity is most likely not physiological. The chain is L-2-hydroxyglutarate dehydrogenase from Escherichia coli O17:K52:H18 (strain UMN026 / ExPEC).